The chain runs to 325 residues: Myo-inositol dehydrogenase Hyg17 (325 aa).

It belongs to the Gfo/Idh/MocA family.

It catalyses the reaction myo-inositol + NAD(+) = myo-inosose-5 + NADH + H(+). The protein operates within antibiotic biosynthesis. In terms of biological role, dehydrogenase involved in the biosynthesis of the aminocyclitol moiety of hygromycin A, a broad-spectrum antibiotic. Catalyzes the NAD(+)-dependent oxidation of myo-inositol to myo-inosose-5 (neo-inosose). Shows reduced activity with scyllo-inositol, minimal activity with L-chiro-inositol and no activity with D-glucose, D-chiro-inositol, epi-inositol, muco-inositol and allo-inositol. Is specific for NAD(+) and cannot use NADP(+). The chain is Myo-inositol dehydrogenase Hyg17 from Streptomyces leeuwenhoekii.